The following is a 368-amino-acid chain: tRNA-specific 2-thiouridylase MnmA (368 aa).

ATP-binding positions include 11-18 (GMSGGVDS) and methionine 37. The interaction with target base in tRNA stretch occupies residues 97-99 (NPD). Cysteine 102 (nucleophile) is an active-site residue. The cysteines at positions 102 and 199 are disulfide-linked. Residue glycine 127 participates in ATP binding. The interaction with tRNA stretch occupies residues 149–151 (KDQ). The Cysteine persulfide intermediate role is filled by cysteine 199. The interaction with tRNA stretch occupies residues 311–312 (RY).

It belongs to the MnmA/TRMU family. In terms of assembly, interacts with TusE.

Its subcellular location is the cytoplasm. It carries out the reaction S-sulfanyl-L-cysteinyl-[protein] + uridine(34) in tRNA + AH2 + ATP = 2-thiouridine(34) in tRNA + L-cysteinyl-[protein] + A + AMP + diphosphate + H(+). Its function is as follows. Catalyzes the 2-thiolation of uridine at the wobble position (U34) of tRNA(Lys), tRNA(Glu) and tRNA(Gln), leading to the formation of s(2)U34, the first step of tRNA-mnm(5)s(2)U34 synthesis. Sulfur is provided by IscS, via a sulfur-relay system. Binds ATP and its substrate tRNAs. The polypeptide is tRNA-specific 2-thiouridylase MnmA (Shigella boydii serotype 18 (strain CDC 3083-94 / BS512)).